We begin with the raw amino-acid sequence, 87 residues long: Putative membrane protein insertion efficiency factor (87 aa).

Belongs to the UPF0161 family.

Its subcellular location is the cell membrane. Its function is as follows. Could be involved in insertion of integral membrane proteins into the membrane. The polypeptide is Putative membrane protein insertion efficiency factor (Ligilactobacillus salivarius (strain UCC118) (Lactobacillus salivarius)).